Here is a 196-residue protein sequence, read N- to C-terminus: Glycerol-3-phosphate acyltransferase (196 aa).

The next 4 helical transmembrane spans lie at 4 to 24, 80 to 100, 114 to 134, and 155 to 175; these read LTLL…AVVI, PFFL…PLYF, AMFP…LLVF, and AYWI…LILW.

Belongs to the PlsY family. As to quaternary structure, probably interacts with PlsX.

The protein resides in the cell inner membrane. The catalysed reaction is an acyl phosphate + sn-glycerol 3-phosphate = a 1-acyl-sn-glycero-3-phosphate + phosphate. It functions in the pathway lipid metabolism; phospholipid metabolism. Catalyzes the transfer of an acyl group from acyl-phosphate (acyl-PO(4)) to glycerol-3-phosphate (G3P) to form lysophosphatidic acid (LPA). This enzyme utilizes acyl-phosphate as fatty acyl donor, but not acyl-CoA or acyl-ACP. This is Glycerol-3-phosphate acyltransferase from Idiomarina loihiensis (strain ATCC BAA-735 / DSM 15497 / L2-TR).